The following is a 366-amino-acid chain: Peptide chain release factor 2 (366 aa).

Gln251 carries the post-translational modification N5-methylglutamine.

This sequence belongs to the prokaryotic/mitochondrial release factor family. In terms of processing, methylated by PrmC. Methylation increases the termination efficiency of RF2.

Its subcellular location is the cytoplasm. Peptide chain release factor 2 directs the termination of translation in response to the peptide chain termination codons UGA and UAA. In Listeria monocytogenes serovar 1/2a (strain ATCC BAA-679 / EGD-e), this protein is Peptide chain release factor 2 (prfB).